Consider the following 367-residue polypeptide: Peptide chain release factor 1 (367 aa).

Residue Gln243 is modified to N5-methylglutamine.

This sequence belongs to the prokaryotic/mitochondrial release factor family. In terms of processing, methylated by PrmC. Methylation increases the termination efficiency of RF1.

The protein localises to the cytoplasm. Peptide chain release factor 1 directs the termination of translation in response to the peptide chain termination codons UAG and UAA. The protein is Peptide chain release factor 1 of Acidovorax sp. (strain JS42).